Here is a 232-residue protein sequence, read N- to C-terminus: Large ribosomal subunit protein uL1 (232 aa).

It belongs to the universal ribosomal protein uL1 family. In terms of assembly, part of the 50S ribosomal subunit.

Binds directly to 23S rRNA. The L1 stalk is quite mobile in the ribosome, and is involved in E site tRNA release. In terms of biological role, protein L1 is also a translational repressor protein, it controls the translation of the L11 operon by binding to its mRNA. This chain is Large ribosomal subunit protein uL1, found in Alkaliphilus oremlandii (strain OhILAs) (Clostridium oremlandii (strain OhILAs)).